Here is a 220-residue protein sequence, read N- to C-terminus: Metalloproteinase inhibitor 2 (220 aa).

The N-terminal stretch at 1–26 (MPGAALPSLLAWLAVLLLGRARPADA) is a signal peptide. Residue C27 coordinates Zn(2+). 2 involved in metalloproteinase-binding regions span residues 27-30 (CSCS) and 95-96 (TE). Disulfide bonds link C27-C98, C29-C127, C39-C152, C154-C201, C159-C164, and C172-C193. The region spanning 27 to 152 (CSCSPIHPQQ…SLNQRYQMGC (126 aa)) is the NTR domain.

This sequence belongs to the protease inhibitor I35 (TIMP) family. Post-translationally, the activity of TIMP2 is dependent on the presence of disulfide bonds.

The protein resides in the secreted. Complexes with metalloproteinases (such as collagenases) and irreversibly inactivates them by binding to their catalytic zinc cofactor. The sequence is that of Metalloproteinase inhibitor 2 (TIMP2) from Gallus gallus (Chicken).